A 507-amino-acid polypeptide reads, in one-letter code: GMP synthase [glutamine-hydrolyzing] (507 aa).

The region spanning 9-202 is the Glutamine amidotransferase type-1 domain; sequence TILIIDFGSQ…VHRIVGVKPG (194 aa). The active-site Nucleophile is cysteine 86. Active-site residues include histidine 176 and glutamate 178. The GMPS ATP-PPase domain maps to 203–395; the sequence is WTMGAYREQA…LGLPDSFIGR (193 aa). ATP is bound at residue 230–236; it reads SGGVDSS.

In terms of assembly, homodimer.

The catalysed reaction is XMP + L-glutamine + ATP + H2O = GMP + L-glutamate + AMP + diphosphate + 2 H(+). It functions in the pathway purine metabolism; GMP biosynthesis; GMP from XMP (L-Gln route): step 1/1. In terms of biological role, catalyzes the synthesis of GMP from XMP. This Brucella melitensis biotype 1 (strain ATCC 23456 / CCUG 17765 / NCTC 10094 / 16M) protein is GMP synthase [glutamine-hydrolyzing].